Consider the following 407-residue polypeptide: (R)-phenyllactyl-CoA dehydratase alpha subunit (407 aa).

Residues 1–4 constitute a propeptide that is removed on maturation; sequence MSDR.

Belongs to the FldB/FldC dehydratase alpha/beta subunit family. Part of the heterotrimeric phenyllactate dehydratase complex FldABC, composed of (R)-phenyllactate CoA-transferase (FldA) and a heterodimeric (R)-phenyllactyl-CoA dehydratase (FldB and FldC). [4Fe-4S] cluster serves as cofactor. The cofactor is No flavin could be detected in the FldABC complex, and the addition of FAD, FMN or riboflavin to the dehydratase do not increase enzymatic activity..

The enzyme catalyses (R)-3-phenyllactoyl-CoA = (E)-cinnamoyl-CoA + H2O. It catalyses the reaction (R)-3-(4-hydroxyphenyl)lactoyl-CoA = (E)-4-coumaroyl-CoA + H2O. It carries out the reaction (R)-3-(indol-3-yl)lactoyl-CoA = (E)-3-(indol-3-yl)acryloyl-CoA + H2O. It participates in amino-acid degradation; L-phenylalanine degradation. Functionally, component of the phenyllactate dehydratase complex FldABC that is involved in the fermentation of L-phenylalanine via a Stickland reaction. This complex catalyzes the reversible syn-dehydration of (R)-phenyllactate to (E)-cinnamate in two steps, a CoA-transfer from cinnamoyl-CoA to phenyllactate, catalyzed by FldA, followed by the dehydration of phenyllactyl-CoA to cinnamoyl-CoA, catalyzed by FldB and FldC. Requires the activator FldI to initiate catalysis. In Clostridium sporogenes, this protein is (R)-phenyllactyl-CoA dehydratase alpha subunit.